The sequence spans 213 residues: uncharacterized protein (213 aa).

2 coiled-coil regions span residues 54 to 78 (KEQT…NLKL) and 108 to 151 (VKDV…STSK). Positions 122–142 (IEKEKEEEKAAKKAEKAEEKK) are enriched in basic and acidic residues. The disordered stretch occupies residues 122-213 (IEKEKEEEKA…FGGKPTGQIW (92 aa)). Over residues 146–188 (KNSTSKSGSKSSKSSSGSSKSSSKSSKSSKSSSGSSKSSSKSS) the composition is skewed to low complexity. Residues 189-199 (KNSKKSSKKSN) show a composition bias toward basic residues.

Belongs to the mimivirus R546 family.

This is an uncharacterized protein from Acanthamoeba polyphaga (Amoeba).